The following is a 575-amino-acid chain: Transcription factor coe2 (575 aa).

The segment at 63–66 (RKSN) is interaction with DNA. The segment at 151-170 (CRVLLTHEVMCSRCCEKKSC) adopts a C5-type zinc-finger fold. Interaction with DNA stretches follow at residues 197-204 (NCLKTAGN) and 236-239 (NNSK). The IPT/TIG domain maps to 254-336 (PCIKAISPSE…CKGAPGRFIY (83 aa)). The disordered stretch occupies residues 450–487 (IRNTSSISPRGYSSSSTPQQSNYSTPSNSMNGYSNVPM). Residues 454–476 (SSISPRGYSSSSTPQQSNYSTPS) are compositionally biased toward low complexity. Residues 477-487 (NSMNGYSNVPM) show a composition bias toward polar residues.

It belongs to the COE family.

The protein localises to the nucleus. May play a pivotal role in the transcriptional cascade that specifies primary neurons in embryos. Stabilizes the higher neural potential of selected progenitor cells that express neurog2/X-ngnr-1 by maintaining Delta-Notch signaling. Thus ensures the transition between neural competence and irreversible commitment to a neural fate. Also promotes neuronal differentiation by activating neurod1 expression, directly or indirectly. The polypeptide is Transcription factor coe2 (Xenopus tropicalis (Western clawed frog)).